A 1410-amino-acid polypeptide reads, in one-letter code: DNA-directed RNA polymerase subunit beta' (1410 aa).

Positions 70, 72, 85, and 88 each coordinate Zn(2+). Positions 460, 462, and 464 each coordinate Mg(2+). C814, C888, C895, and C898 together coordinate Zn(2+).

Belongs to the RNA polymerase beta' chain family. As to quaternary structure, the RNAP catalytic core consists of 2 alpha, 1 beta, 1 beta' and 1 omega subunit. When a sigma factor is associated with the core the holoenzyme is formed, which can initiate transcription. Mg(2+) serves as cofactor. The cofactor is Zn(2+).

The catalysed reaction is RNA(n) + a ribonucleoside 5'-triphosphate = RNA(n+1) + diphosphate. Functionally, DNA-dependent RNA polymerase catalyzes the transcription of DNA into RNA using the four ribonucleoside triphosphates as substrates. In Saccharophagus degradans (strain 2-40 / ATCC 43961 / DSM 17024), this protein is DNA-directed RNA polymerase subunit beta'.